Reading from the N-terminus, the 356-residue chain is tRNA-specific 2-thiouridylase MnmA (356 aa).

6 to 13 (AVSGGTDS) contributes to the ATP binding site. The active-site Nucleophile is the Cys-95. A disulfide bond links Cys-95 and Cys-195. Gly-119 contacts ATP. The interval 145–147 (KDQ) is interaction with tRNA. Residue Cys-195 is the Cysteine persulfide intermediate of the active site. The tract at residues 300–301 (RY) is interaction with tRNA.

This sequence belongs to the MnmA/TRMU family.

Its subcellular location is the cytoplasm. The enzyme catalyses S-sulfanyl-L-cysteinyl-[protein] + uridine(34) in tRNA + AH2 + ATP = 2-thiouridine(34) in tRNA + L-cysteinyl-[protein] + A + AMP + diphosphate + H(+). Functionally, catalyzes the 2-thiolation of uridine at the wobble position (U34) of tRNA, leading to the formation of s(2)U34. The chain is tRNA-specific 2-thiouridylase MnmA from Oleidesulfovibrio alaskensis (strain ATCC BAA-1058 / DSM 17464 / G20) (Desulfovibrio alaskensis).